The sequence spans 309 residues: Gamma-hemolysin component A (309 aa).

The N-terminal stretch at 1-29 (MIKNKILTATLAVGLIAPLANPFIEISKA) is a signal peptide.

Belongs to the aerolysin family. Toxicity requires sequential binding and synergistic association of a class S and a class F component which form heterooligomeric complexes. HlgA (class S) associates with HlgB (class F) thus forming an AB toxin in strains producing both gamma-hemolysins and leukocidins. HlgA and LukF-PV can also form a complex.

The protein localises to the secreted. In terms of biological role, toxin that seems to act by forming pores in the membrane of the cell. Has a hemolytic and a leucotoxic activity. The polypeptide is Gamma-hemolysin component A (hlgA) (Staphylococcus aureus (strain MRSA252)).